Consider the following 449-residue polypeptide: Tubulin alpha chain (449 aa).

GTP is bound at residue glutamine 11. Residue lysine 40 is modified to N6-acetyllysine. Residues glutamate 71, serine 140, glycine 144, threonine 145, threonine 179, asparagine 206, and asparagine 228 each coordinate GTP. Glutamate 71 contacts Mg(2+). Glutamate 254 is an active-site residue.

This sequence belongs to the tubulin family. In terms of assembly, dimer of alpha and beta chains. A typical microtubule is a hollow water-filled tube with an outer diameter of 25 nm and an inner diameter of 15 nM. Alpha-beta heterodimers associate head-to-tail to form protofilaments running lengthwise along the microtubule wall with the beta-tubulin subunit facing the microtubule plus end conferring a structural polarity. Microtubules usually have 13 protofilaments but different protofilament numbers can be found in some organisms and specialized cells. The cofactor is Mg(2+). In terms of processing, undergoes a tyrosination/detyrosination cycle, the cyclic removal and re-addition of a C-terminal tyrosine residue by the enzymes tubulin tyrosine carboxypeptidase (TTCP) and tubulin tyrosine ligase (TTL), respectively. Post-translationally, some glutamate residues at the C-terminus are either polyglutamylated or polyglycylated. These 2 modifications occur exclusively on glutamate residues and result in either polyglutamate or polyglycine chains on the gamma-carboxyl group. Both modifications can coexist on the same protein on adjacent residues, and lowering polyglycylation levels increases polyglutamylation, and reciprocally. The precise function of such modifications is still unclear but they regulate the assembly and dynamics of axonemal microtubules. Acetylation of alpha chains at Lys-40 stabilizes microtubules and affects affinity and processivity of microtubule motors. This modification has a role in multiple cellular functions, ranging from cell motility, cell cycle progression or cell differentiation to intracellular trafficking and signaling.

It is found in the cytoplasm. It localises to the cytoskeleton. It catalyses the reaction GTP + H2O = GDP + phosphate + H(+). Tubulin is the major constituent of microtubules, a cylinder consisting of laterally associated linear protofilaments composed of alpha- and beta-tubulin heterodimers. Microtubules grow by the addition of GTP-tubulin dimers to the microtubule end, where a stabilizing cap forms. Below the cap, tubulin dimers are in GDP-bound state, owing to GTPase activity of alpha-tubulin. The protein is Tubulin alpha chain of Tetrahymena thermophila.